We begin with the raw amino-acid sequence, 661 residues long: MAAGETQLYAKVSNKLKSRSSPSLLEPLLAMGFPVHTALKALAATGRKTAEEALAWLHDHCNDPSLDDPIPQEYALFLCPTGPLLEKLQEFWRESKRQCAKNRAHEVFPHVTLCDFFTCEDQKVECLYEALKRAGDRLLGSFPTAVPLALHSSISYLGFFVSGSPADVIREFAMTFATEASLLAGTSVSRFWIFSQVPGHGPNLRLSNLTRASFVSHYILQKYCSVKPCTKQLHLTLAHKFYPHHQRTLEQLARAIPLGHSCQWTAALYSRDMRFVHYQTLRALFQYKPQNVDELTLSPGDYIFVDPTQQDEASEGWVIGISQRTGCRGFLPENYTDRASESDTWVKHRMYTFSLATDLNSRKDGEASSRCSGEFLPQTARSLSSLQALQATVARKSVLVVRHGERVDQIFGKAWLQQCSTPDGKYYRPDLNFPCSLPRRSRGIKDFENDPPLSSCGIFQSRIAGDALLDSGIRISSVFASPALRCVQTAKLILEELKLEKKIKIRVEPGIFEWTKWEAGKTTPTLMSLEELKEANFNIDTDYRPAFPLSALMPAESYQEYMDRCTASMVQIVNTCPQDTGVILIVSHGSTLDSCTRPLLGLPPRECGDFAQLVRKIPSLGMCFCEENKEEGKWELVNPPVKTLTHGANAAFNWRNWISGN.

A UBA domain is found at 15 to 60 (KLKSRSSPSLLEPLLAMGFPVHTALKALAATGRKTAEEALAWLHDH). The region spanning 276 to 341 (VHYQTLRALF…PENYTDRASE (66 aa)) is the SH3 domain. The interval 395-661 (RKSVLVVRHG…FNWRNWISGN (267 aa)) is phosphatase-like.

As to quaternary structure, homodimer or homooligomer. Interacts with CBL. Part of a complex containing CBL and activated EGFR. Interacts with ubiquitin and with mono-ubiquitinated proteins. Interacts with dynamin. As to expression, highest expression of UBASH3A in tissues belonging to the immune system, including spleen, peripheral blood leukocytes, thymus and bone marrow.

The protein resides in the cytoplasm. Its subcellular location is the nucleus. Interferes with CBL-mediated down-regulation and degradation of receptor-type tyrosine kinases. Promotes accumulation of activated target receptors, such as T-cell receptors, EGFR and PDGFRB, on the cell surface. Exhibits negligible protein tyrosine phosphatase activity at neutral pH. May act as a dominant-negative regulator of UBASH3B-dependent dephosphorylation. May inhibit dynamin-dependent endocytic pathways by functionally sequestering dynamin via its SH3 domain. This Homo sapiens (Human) protein is Ubiquitin-associated and SH3 domain-containing protein A (UBASH3A).